The primary structure comprises 594 residues: Aspartate--tRNA(Asp/Asn) ligase (594 aa).

Glutamate 175 contacts L-aspartate. The segment at 199–202 (QQFK) is aspartate. The L-aspartate site is built by arginine 221 and histidine 455. Position 221 to 223 (221 to 223 (RDE)) interacts with ATP. An ATP-binding site is contributed by glutamate 489. Arginine 496 serves as a coordination point for L-aspartate. Residue 541 to 544 (GIDR) participates in ATP binding.

It belongs to the class-II aminoacyl-tRNA synthetase family. Type 1 subfamily. As to quaternary structure, homodimer.

It localises to the cytoplasm. The catalysed reaction is tRNA(Asx) + L-aspartate + ATP = L-aspartyl-tRNA(Asx) + AMP + diphosphate. Functionally, aspartyl-tRNA synthetase with relaxed tRNA specificity since it is able to aspartylate not only its cognate tRNA(Asp) but also tRNA(Asn). Reaction proceeds in two steps: L-aspartate is first activated by ATP to form Asp-AMP and then transferred to the acceptor end of tRNA(Asp/Asn). The protein is Aspartate--tRNA(Asp/Asn) ligase of Pelagibacter ubique (strain HTCC1062).